Consider the following 265-residue polypeptide: Oxidoreductase nsrR (265 aa).

The protein belongs to the avfA family.

The protein operates within secondary metabolite biosynthesis. Its function is as follows. Oxidoreductase; part of the gene cluster that mediates the biosynthesis of the tetrahydroxanthone dimer neosartorin, which exhibits antibacterial activity. The two different monomeric units appear to be synthesized by the same set of enzymes, among which the Baeyer-Villiger monooxygenase nsrF is the key enzyme for the divergence of the biosynthetic routes. The pathway begins with the synthesis of atrochrysone thioester by the polyketide synthase nsrB. The atrochrysone carboxyl ACP thioesterase nsrC then breaks the thioester bond and releases the atrochrysone carboxylic acid from AacuL. Atrochrysone carboxylic acid is decarboxylated by the decarboxylase nsrE, and oxidized by the anthrone oxygenase nsrD to yield emodin. Emodin is then reduced to emodin hydroquinone by the oxidoreductase nsrR. A-ring reduction by the short chain dehydrogenase nsrJ, dehydration by the scytalone dehydratase-like protein nsrI and probable spontaneous re-oxidation, results in overall deoxygenation to chrysophanol. The Baeyer-Villiger monooxygenase nsrF accepts chrysophanol as a substrate to insert one oxygen atom at two different positions to yield the precursors of both monomric units. NsrF is promiscuous/flexible in interacting with the 2 (non methylated and methylated) aromatic rings of chrysophanol, thus diverging the biosynthetic pathway at this point. After the hydrolysis of the lactones, methylesterification by the methyltransferase nsrG yields respectively moniliphenone and 2,2',6'-trihydroxy-4-methyl-6-methoxya-cyldiphenylmethanone. The next steps are the hydroxylation by the FAD-dependent monooxygenase nsrK, followed by isomerization by the monooxygenase nsrQ. The short chain dehydrogenase/reductase nsrO then catalyzes the C-5 ketoreduction to give the xanthone skeleton of blennolide C and 5-acetylblennolide A. The acetyltransferase nsrL has a strict substrate specificity and uses only blennolide A but not blennolide C to yield 5-acetylblennolide A as the single-acetylated product. In the final step of the biosynthesis, the heterodimerization of the 2 xanthones, blennolide C and 5-acetylblennolide A, is catalyzed by the cytochrome P450 monooxygenase nsrP. NsrP can utilize at least three different xanthones as its substrates to perform the dimerization reaction. The protein is Oxidoreductase nsrR of Aspergillus novofumigatus (strain IBT 16806).